A 177-amino-acid polypeptide reads, in one-letter code: Bifunctional protein PyrR (177 aa).

Residues 99 to 111 (LVLIDDVIYKGRT) carry the PRPP-binding motif.

The protein belongs to the purine/pyrimidine phosphoribosyltransferase family. PyrR subfamily.

It catalyses the reaction UMP + diphosphate = 5-phospho-alpha-D-ribose 1-diphosphate + uracil. Functionally, regulates the transcription of the pyrimidine nucleotide (pyr) operon in response to exogenous pyrimidines. Its function is as follows. Also displays a weak uracil phosphoribosyltransferase activity which is not physiologically significant. The chain is Bifunctional protein PyrR from Picosynechococcus sp. (strain ATCC 27264 / PCC 7002 / PR-6) (Agmenellum quadruplicatum).